The chain runs to 537 residues: Chaperonin GroEL (537 aa).

ATP is bound by residues 29-32 (TLGP), 86-90 (DGTTT), glycine 413, 477-479 (NAA), and aspartate 493.

The protein belongs to the chaperonin (HSP60) family. Forms a cylinder of 14 subunits composed of two heptameric rings stacked back-to-back. Interacts with the co-chaperonin GroES.

Its subcellular location is the cytoplasm. It carries out the reaction ATP + H2O + a folded polypeptide = ADP + phosphate + an unfolded polypeptide.. Together with its co-chaperonin GroES, plays an essential role in assisting protein folding. The GroEL-GroES system forms a nano-cage that allows encapsulation of the non-native substrate proteins and provides a physical environment optimized to promote and accelerate protein folding. The chain is Chaperonin GroEL from Parascardovia denticolens (Bifidobacterium denticolens).